Consider the following 356-residue polypeptide: MRRELLLEKIETYKAIMPWYVLDYYQSKLAVPYSFTTLYEYLKEYKRFFDWLMDADLTKVPKIADIDLSTLEHLTKKDLEAFVLYLRERPSLNTYSTKEGLSQTTINRTLSALSSLYKYLTEEVENDQGEPYFYRNVMKKVSTKKKKETLASRAENIKQKLFLGDETLAFLDYVDKEYEQKLSNRAKSSFRKNKERDLAIIALLLASGVRLSEAVNLDLKDVNLNMMIIEVIRKGGKRDSVNVAGFAKGYLESYLAVRQRRYKAEKQDLAFFLTEYRGVPNRMDASSIEKMVGKYSEDFKIRVTPHKLRHTLATRLYDATKSQVLVSHQLGHSSTQVTDLYTHIVNDEQKNALDNL.

The Core-binding (CB) domain maps to 16–121 (IMPWYVLDYY…ALSSLYKYLT (106 aa)). The Tyr recombinase domain maps to 169–354 (AFLDYVDKEY…VNDEQKNALD (186 aa)). Residues Arg210, Lys234, His306, Arg309, and His332 contribute to the active site. Tyr341 (O-(3'-phospho-DNA)-tyrosine intermediate) is an active-site residue.

This sequence belongs to the 'phage' integrase family. XerS subfamily.

It is found in the cytoplasm. FtsK is required for recombination. Site-specific tyrosine recombinase, which acts by catalyzing the cutting and rejoining of the recombining DNA molecules. Essential to convert dimers of the bacterial chromosome into monomers to permit their segregation at cell division. The polypeptide is Tyrosine recombinase XerS (Streptococcus pyogenes serotype M2 (strain MGAS10270)).